The sequence spans 1444 residues: DNA polymerase III PolC-type (1444 aa).

The 157-residue stretch at 428–584 folds into the Exonuclease domain; it reads YCVFDVETTG…FDAEATAYLA (157 aa).

The protein belongs to the DNA polymerase type-C family. PolC subfamily.

The protein resides in the cytoplasm. The catalysed reaction is DNA(n) + a 2'-deoxyribonucleoside 5'-triphosphate = DNA(n+1) + diphosphate. Functionally, required for replicative DNA synthesis. This DNA polymerase also exhibits 3' to 5' exonuclease activity. The protein is DNA polymerase III PolC-type of Listeria innocua serovar 6a (strain ATCC BAA-680 / CLIP 11262).